Reading from the N-terminus, the 148-residue chain is Lysozyme-like protein 6 (148 aa).

Positions 1–19 (MTSPLLISLASCLVAVNQA) are cleaved as a signal peptide. Residues 20–148 (SLIGRCDLAK…SYWMTGCHLA (129 aa)) form the C-type lysozyme domain. 4 cysteine pairs are disulfide-bonded: C25–C145, C49–C133, C83–C98, and C94–C112. Residues E54 and D71 contribute to the active site.

Belongs to the glycosyl hydrolase 22 family. As to quaternary structure, monomer.

The protein resides in the secreted. Its subcellular location is the cell surface. It is found in the cell projection. It localises to the cilium. The protein localises to the flagellum. The catalysed reaction is Hydrolysis of (1-&gt;4)-beta-linkages between N-acetylmuramic acid and N-acetyl-D-glucosamine residues in a peptidoglycan and between N-acetyl-D-glucosamine residues in chitodextrins.. Functionally, may be involved sperm-egg plasma membrane adhesion and fusion during fertilization. Exhibits bacteriolytic activity in vitro against Micrococcus luteus and Staphylococcus aureus. Shows weak bacteriolytic activity against Gram-positive bacteria at physiological pH. Bacteriolytic activity is pH-dependent, with a maximum at around pH 5.6. This chain is Lysozyme-like protein 6 (LYZL6), found in Bos taurus (Bovine).